Consider the following 357-residue polypeptide: Phosphoribosylformylglycinamidine cyclo-ligase (357 aa).

The protein belongs to the AIR synthase family.

It is found in the cytoplasm. It catalyses the reaction 2-formamido-N(1)-(5-O-phospho-beta-D-ribosyl)acetamidine + ATP = 5-amino-1-(5-phospho-beta-D-ribosyl)imidazole + ADP + phosphate + H(+). Its pathway is purine metabolism; IMP biosynthesis via de novo pathway; 5-amino-1-(5-phospho-D-ribosyl)imidazole from N(2)-formyl-N(1)-(5-phospho-D-ribosyl)glycinamide: step 2/2. The chain is Phosphoribosylformylglycinamidine cyclo-ligase from Rhizobium leguminosarum bv. trifolii (strain WSM2304).